The primary structure comprises 350 residues: Small ribosomal subunit biogenesis GTPase RsgA (350 aa).

Positions 1 to 17 are enriched in polar residues; it reads MSKNKLSKGQQRRVNAN. Residues 1-33 are disordered; sequence MSKNKLSKGQQRRVNANHQRRLKTSKEKPDYDD. A CP-type G domain is found at 104-273; sequence TSVLTRPDFY…VIDSPGVREF (170 aa). GTP-binding positions include 160-163 and 214-222; these read NKID and GQSGVGKSS. Cys297, Cys302, His304, and Cys310 together coordinate Zn(2+).

This sequence belongs to the TRAFAC class YlqF/YawG GTPase family. RsgA subfamily. As to quaternary structure, monomer. Associates with 30S ribosomal subunit, binds 16S rRNA. Zn(2+) is required as a cofactor.

It localises to the cytoplasm. Its function is as follows. One of several proteins that assist in the late maturation steps of the functional core of the 30S ribosomal subunit. Helps release RbfA from mature subunits. May play a role in the assembly of ribosomal proteins into the subunit. Circularly permuted GTPase that catalyzes slow GTP hydrolysis, GTPase activity is stimulated by the 30S ribosomal subunit. The chain is Small ribosomal subunit biogenesis GTPase RsgA from Escherichia coli (strain SMS-3-5 / SECEC).